Reading from the N-terminus, the 109-residue chain is Large ribosomal subunit protein uL24 (109 aa).

Positions 85-109 (KYGTDPKTNKKVRLSRKTNNLVGGQ) are disordered.

It belongs to the universal ribosomal protein uL24 family. Part of the 50S ribosomal subunit.

Functionally, one of two assembly initiator proteins, it binds directly to the 5'-end of the 23S rRNA, where it nucleates assembly of the 50S subunit. One of the proteins that surrounds the polypeptide exit tunnel on the outside of the subunit. The polypeptide is Large ribosomal subunit protein uL24 (Mycoplasmoides gallisepticum (strain R(low / passage 15 / clone 2)) (Mycoplasma gallisepticum)).